The primary structure comprises 877 residues: Phosphoenolpyruvate carboxylase (877 aa).

Residues histidine 137 and lysine 542 contribute to the active site.

This sequence belongs to the PEPCase type 1 family. Requires Mg(2+) as cofactor.

It carries out the reaction oxaloacetate + phosphate = phosphoenolpyruvate + hydrogencarbonate. In terms of biological role, forms oxaloacetate, a four-carbon dicarboxylic acid source for the tricarboxylic acid cycle. This chain is Phosphoenolpyruvate carboxylase, found in Tolumonas auensis (strain DSM 9187 / NBRC 110442 / TA 4).